Consider the following 320-residue polypeptide: rRNA 2'-O-methyltransferase fibrillarin 2 (320 aa).

The disordered stretch occupies residues 1–79 (MRPPLTGSGG…GRGGMKGGSK (79 aa)). 2 stretches are compositionally biased toward gly residues: residues 7 to 44 (GSGGGFSGGRGRGGYSGGRGDGGFSGGRGGGGRGGGRG) and 57 to 76 (PPRGGARGGRGPAGRGGMKG). S-adenosyl-L-methionine contacts are provided by residues 167-168 (TT), 186-187 (EF), 211-212 (DA), and 231-234 (DVAQ).

This sequence belongs to the methyltransferase superfamily. Fibrillarin family. As to quaternary structure, component of box C/D small nucleolar ribonucleoprotein (snoRNP) particles. Interacts with groundnut rosette virus long-distance movement protein; this interaction is required for virus long-distance movement protein transiting through host Cajal body and nucleolus, relocalization of fibrillarin to the cytoplasm, and in presence of viral RNA, leads to the formation of stable RNPs. Interacts (via GAR domain) with the hordeivirus TGB1 movement protein (via the first 82 amino acid residues). Interacts with PRMT11 and PRMT12. Interacts with MED19A. Methylated by PRMT11 and PRMT12. As to expression, expressed in roots and flowers. Expressed in leaves and stems. Expression levels decrease during aging.

The protein localises to the nucleus. It is found in the nucleolus. It carries out the reaction a ribonucleotide in rRNA + S-adenosyl-L-methionine = a 2'-O-methylribonucleotide in rRNA + S-adenosyl-L-homocysteine + H(+). The enzyme catalyses L-glutaminyl-[histone H2A] + S-adenosyl-L-methionine = N(5)-methyl-L-glutaminyl-[histone H2A] + S-adenosyl-L-homocysteine + H(+). Its function is as follows. S-adenosyl-L-methionine-dependent methyltransferase that has the ability to methylate both RNAs and proteins. Involved in pre-rRNA processing. Utilizes the methyl donor S-adenosyl-L-methionine to catalyze the site-specific 2'-hydroxyl methylation of ribose moieties in pre-ribosomal RNA. Site specificity is provided by a guide RNA that base pairs with the substrate. Methylation occurs at a characteristic distance from the sequence involved in base pairing with the guide RNA. Also acts as a protein methyltransferase by mediating methylation of 'Gln-105' of histone H2A (H2AQ105me), a modification that impairs binding of the FACT complex and is specifically present at 35S ribosomal DNA locus. Acts as a negative regulator of expression of immune responsive genes, including pathogenesis-related gene 1 (PR1), and of resistance against bacterial pathogen. Binds to MED19A, a positive regulator of PR1 expression, to repress the activator activity of MED19A. In response to the bacterial pathogen-associated molecular pattern (PAMP) elf18, associates with the long non-coding RNA (lncRNA) ELENA1 (At4g16355), and releases its repression of MED19A. Possesses ribonuclease activity toward rRNA in vitro. Binds phosphoinositides, phospholipids and phosphatidic acid in vitro. This is rRNA 2'-O-methyltransferase fibrillarin 2 from Arabidopsis thaliana (Mouse-ear cress).